A 403-amino-acid polypeptide reads, in one-letter code: Acetylornithine aminotransferase (403 aa).

Pyridoxal 5'-phosphate contacts are provided by residues 101–102 and Phe134; that span reads GA. Arg137 is a N(2)-acetyl-L-ornithine binding site. Residue 219–222 coordinates pyridoxal 5'-phosphate; it reads DEVQ. N6-(pyridoxal phosphate)lysine is present on Lys248. A N(2)-acetyl-L-ornithine-binding site is contributed by Thr276. Thr277 lines the pyridoxal 5'-phosphate pocket.

It belongs to the class-III pyridoxal-phosphate-dependent aminotransferase family. ArgD subfamily. Homodimer. It depends on pyridoxal 5'-phosphate as a cofactor.

It localises to the cytoplasm. The enzyme catalyses N(2)-acetyl-L-ornithine + 2-oxoglutarate = N-acetyl-L-glutamate 5-semialdehyde + L-glutamate. It functions in the pathway amino-acid biosynthesis; L-arginine biosynthesis; N(2)-acetyl-L-ornithine from L-glutamate: step 4/4. The protein is Acetylornithine aminotransferase of Brucella melitensis biotype 1 (strain ATCC 23456 / CCUG 17765 / NCTC 10094 / 16M).